Consider the following 117-residue polypeptide: Reprimo-like protein (117 aa).

A helical transmembrane segment spans residues 64–84 (VAQIAVLCVLSLTVVFGVFFL). Phosphoserine is present on Ser106.

The protein belongs to the reprimo family.

The protein localises to the membrane. The protein is Reprimo-like protein (Rprml) of Mus musculus (Mouse).